Consider the following 129-residue polypeptide: Phosphoribosyl-AMP cyclohydrolase (129 aa).

Asp-94 contributes to the Mg(2+) binding site. Cys-95 lines the Zn(2+) pocket. Residues Asp-96 and Asp-98 each coordinate Mg(2+). The Zn(2+) site is built by Cys-111 and Cys-118.

This sequence belongs to the PRA-CH family. In terms of assembly, homodimer. The cofactor is Mg(2+). Zn(2+) serves as cofactor.

Its subcellular location is the cytoplasm. It catalyses the reaction 1-(5-phospho-beta-D-ribosyl)-5'-AMP + H2O = 1-(5-phospho-beta-D-ribosyl)-5-[(5-phospho-beta-D-ribosylamino)methylideneamino]imidazole-4-carboxamide. It functions in the pathway amino-acid biosynthesis; L-histidine biosynthesis; L-histidine from 5-phospho-alpha-D-ribose 1-diphosphate: step 3/9. In terms of biological role, catalyzes the hydrolysis of the adenine ring of phosphoribosyl-AMP. In Corynebacterium efficiens (strain DSM 44549 / YS-314 / AJ 12310 / JCM 11189 / NBRC 100395), this protein is Phosphoribosyl-AMP cyclohydrolase.